The following is a 484-amino-acid chain: GTPase Obg (484 aa).

Residues 7–164 (PRFVDRVVIH…RDLTLELKTV (158 aa)) enclose the Obg domain. The interval 21–43 (SGGNGCASVHREKFKPLGGPDGG) is disordered. An OBG-type G domain is found at 165-345 (ADVGLVGFPS…LIFGLSQMIS (181 aa)). GTP contacts are provided by residues 171–178 (GFPSAGKS), 196–200 (FTTLV), 217–220 (DVPG), 297–300 (NKID), and 326–328 (STA). Mg(2+)-binding residues include Ser178 and Thr198. Residues 363 to 441 (PIPVDDSGFT…IGEMTFDWEP (79 aa)) enclose the OCT domain. Residues 439 to 484 (WEPQTPAGEPVAMSGRGTDPRLDSNKRVGAAERKAARSRRREHGDG) are disordered. Residues 456–473 (TDPRLDSNKRVGAAERKA) show a composition bias toward basic and acidic residues. Positions 474-484 (ARSRRREHGDG) are enriched in basic residues.

This sequence belongs to the TRAFAC class OBG-HflX-like GTPase superfamily. OBG GTPase family. In terms of assembly, monomer. The cofactor is Mg(2+).

It localises to the cytoplasm. An essential GTPase which binds GTP, GDP and possibly (p)ppGpp with moderate affinity, with high nucleotide exchange rates and a fairly low GTP hydrolysis rate. Plays a role in control of the cell cycle, stress response, ribosome biogenesis and in those bacteria that undergo differentiation, in morphogenesis control. The protein is GTPase Obg of Mycobacterium tuberculosis (strain CDC 1551 / Oshkosh).